A 349-amino-acid polypeptide reads, in one-letter code: MIEFDNLTYLHGKPQGTGLLKANPEDFVVVEDLGFEPDGEGEHILVRILKNGCNTRFVADALAKFLKIHAREVSFAGQKDKHAVTEQWLCARVPGKEMPDLSAFQLEGCQVLEYARHKRKLRLGALKGNAFTLVLREVSNRDDVEQRLIDICVKGVPNYFGAQRFGIGGSNLQGALRWAQTNTPVRDRNKRSFWLSAARSALFNQIVAERLKKADVNQVVDGDALQLAGRGSWFVATTEELAELQHRVNDKELMITAALPGSGEWGTQRKALAFEQAAVAAETELQALLVREKVEAARRAMLLYPQQLSWNWWDDVTVEIRFWLPAGSFATSVVRELINTTGDYAHIAE.

Position 27 (Phe-27) interacts with substrate. Asp-80 serves as the catalytic Nucleophile. Asn-129 serves as a coordination point for substrate. Residues 155-303 (GVPNYFGAQR…VEAARRAMLL (149 aa)) form the TRUD domain. Position 329 (Phe-329) interacts with substrate.

The protein belongs to the pseudouridine synthase TruD family.

The catalysed reaction is uridine(13) in tRNA = pseudouridine(13) in tRNA. Its function is as follows. Responsible for synthesis of pseudouridine from uracil-13 in transfer RNAs. In Shigella boydii serotype 4 (strain Sb227), this protein is tRNA pseudouridine synthase D.